We begin with the raw amino-acid sequence, 477 residues long: Glycogen synthase (477 aa).

Residue K15 coordinates ADP-alpha-D-glucose.

It belongs to the glycosyltransferase 1 family. Bacterial/plant glycogen synthase subfamily.

It carries out the reaction [(1-&gt;4)-alpha-D-glucosyl](n) + ADP-alpha-D-glucose = [(1-&gt;4)-alpha-D-glucosyl](n+1) + ADP + H(+). The protein operates within glycan biosynthesis; glycogen biosynthesis. In terms of biological role, synthesizes alpha-1,4-glucan chains using ADP-glucose. This Halorhodospira halophila (strain DSM 244 / SL1) (Ectothiorhodospira halophila (strain DSM 244 / SL1)) protein is Glycogen synthase.